The chain runs to 422 residues: UPF0761 membrane protein Paes_1471 (422 aa).

A run of 6 helical transmembrane segments spans residues 47-67 (LLSIVPLMAVILSVLSVSPVF), 103-123 (SVPTIGGLSLFIIALFLISTI), 143-163 (FTLYWTVLTLGPIFIGSSLVA), 185-205 (LLLLPVMNTFLAFFLLYILVP), 208-228 (KVKFVHAFSGAILATLLFEFS), and 247-267 (GALSVIPLLFFWIYLIWVVAL).

Belongs to the UPF0761 family.

It localises to the cell inner membrane. The sequence is that of UPF0761 membrane protein Paes_1471 from Prosthecochloris aestuarii (strain DSM 271 / SK 413).